Here is a 274-residue protein sequence, read N- to C-terminus: 2-dehydro-3-deoxyphosphooctonate aldolase (274 aa).

It belongs to the KdsA family.

It localises to the cytoplasm. It catalyses the reaction D-arabinose 5-phosphate + phosphoenolpyruvate + H2O = 3-deoxy-alpha-D-manno-2-octulosonate-8-phosphate + phosphate. Its pathway is carbohydrate biosynthesis; 3-deoxy-D-manno-octulosonate biosynthesis; 3-deoxy-D-manno-octulosonate from D-ribulose 5-phosphate: step 2/3. It functions in the pathway bacterial outer membrane biogenesis; lipopolysaccharide biosynthesis. The chain is 2-dehydro-3-deoxyphosphooctonate aldolase from Rickettsia canadensis (strain McKiel).